Reading from the N-terminus, the 502-residue chain is Neuronal acetylcholine receptor subunit alpha-7 (502 aa).

The first 22 residues, 1-22 (MCGRRGGIWLALAAALLHVSLQ), serve as a signal peptide directing secretion. The Extracellular segment spans residues 23–233 (GEFQRRLYKE…VTMRRRTLYY (211 aa)). R42 and V44 together coordinate Ca(2+). N-linked (GlcNAc...) asparagine glycosylation is found at N46, N90, and N133. A disulfide bond links C150 and C164. Ca(2+) contacts are provided by S172 and Y210. A disulfide bridge connects residues C212 and C213. Transmembrane regions (helical) follow at residues 234-254 (GLNLLIPCVLISALALLVFLL), 262-282 (ISLGITVLLSLTVFMLLVAEI), and 295-315 (QYFASTMIIVGLSVVVTVIVL). The segment at 260-267 (EKISLGIT) is essential for TMEM35A/NACHO-mediated proper subunit assembly and trafficking to cell membrane. At 316–469 (RYHHHDPDGG…WKFAACVVDR (154 aa)) the chain is on the cytoplasmic side. A helical membrane pass occupies residues 470–490 (LCLMAFSVFTIICTIGILMSA).

The protein belongs to the ligand-gated ion channel (TC 1.A.9) family. Acetylcholine receptor (TC 1.A.9.1) subfamily. Alpha-7/CHRNA7 sub-subfamily. As to quaternary structure, homopentamer. Can also form heteropentamers with CHRNB2, mainly found in basal forebrain cholinergic neurons. Interacts with RIC3; which is required for proper folding and assembly. Interacts with LYPD6. Interacts with CANX. Post-translationally, glycosylations at Asn-46, Asn-90 and Asn-133 are essential for TMEM35A/NACHO-mediated proper subunit assembly and trafficking to the cell membrane. As to expression, higly expressed in brain. ALso expressed in immune cells sucha as macrophages.

It localises to the postsynaptic cell membrane. The protein localises to the cell membrane. The catalysed reaction is K(+)(in) = K(+)(out). It catalyses the reaction Na(+)(in) = Na(+)(out). The enzyme catalyses Ca(2+)(in) = Ca(2+)(out). It carries out the reaction choline(out) = choline(in). The catalysed reaction is NH4(+)(in) = NH4(+)(out). It catalyses the reaction L-arginine(in) = L-arginine(out). The enzyme catalyses guanidine(out) = guanidine(in). Its activity is regulated as follows. Activated by a myriad of ligands such as acetylcholine, cytisine, nicotine, choline and epibatidine. Oligomeric amyloid-beta protein 42 activates specifially CHRNA7:CHRNB2 nAchRs. Activity is modulated by positive allosteric modulators (PAMs), such as flavonoids, with a wide range of chemical diversity, pharmacological sensitivity and efficacy. AChR activity is inhibited by the antagonists alpha-conotoxons RgIA, ImI and ImII, small disulfide-constrained peptides from cone snails. Component of neuronal acetylcholine receptors (nAChRs) that function as pentameric, ligand-gated cation channels with high calcium permeability among other activities. nAChRs are excitatory neurotrasnmitter receptors formed by a collection of nAChR subunits known to mediate synaptic transmission in the nervous system and the neuromuscular junction. Each nAchR subunit confers differential attributes to channel properties, including activation, deactivation and desensitization kinetics, pH sensitivity, cation permeability, and binding to allosteric modulators. CHRNA7 forms homopentameric neuronal acetylcholine receptors abundantly expressed in the central nervous system, characterized by fast desensitization and high calcium permeability. Also forms heteropentamers with CHRNB2, mainly expressed in basal forebrain cholinergic neurons. Involved in the modulation of calcium-dependent signaling pathways and influences the release of neurotransmitters, including dopamine, glutamate and GABA. Involved in the modulation of calcium-dependent signaling pathways and influences the release of neurotransmitters, including dopamine, glutamate and GABA. Also expressed in non-neuronal cells such as immune cells like lymphocytes, monocytes and macrophages. In T cells, activation induces metabotropic signaling that results in an increase of intracellular Ca2+ concentrations, independent of ionotropic receptor functions. In macrophages, required for acetylcholine-mediated inhibition of TNF and other inflammatory cytokine release. Once activated by acetylcholine, nicotine or other agonists, selectively inhibits production of pro-inflammatory cytokines while leaving anti-inflammatory cytokines undisturbed. Stimulates the cholinergic anti-inflammatory pathway, controlling inflammation by inhibiting NFKB nuclear translocation and activating the JAK2-STAT3 pathway, independently of ion channel activity. Also expressed in the urothelium where it modulates reflex bladder activity by increasing intracellular calcium through internal stores and decreasing basal ATP release. In Mus musculus (Mouse), this protein is Neuronal acetylcholine receptor subunit alpha-7 (Chrna7).